The primary structure comprises 528 residues: Arginine--tRNA ligase (528 aa).

Positions 112–122 match the 'HIGH' region motif; that stretch reads ANPTGPLHIGH.

The protein belongs to the class-I aminoacyl-tRNA synthetase family. In terms of assembly, monomer.

The protein localises to the cytoplasm. It catalyses the reaction tRNA(Arg) + L-arginine + ATP = L-arginyl-tRNA(Arg) + AMP + diphosphate. The chain is Arginine--tRNA ligase from Wolinella succinogenes (strain ATCC 29543 / DSM 1740 / CCUG 13145 / JCM 31913 / LMG 7466 / NCTC 11488 / FDC 602W) (Vibrio succinogenes).